Consider the following 101-residue polypeptide: UPF0473 protein EF_1204 (101 aa).

It belongs to the UPF0473 family.

This is UPF0473 protein EF_1204 from Enterococcus faecalis (strain ATCC 700802 / V583).